An 89-amino-acid polypeptide reads, in one-letter code: Small ribosomal subunit protein uS15 (89 aa).

This sequence belongs to the universal ribosomal protein uS15 family. As to quaternary structure, part of the 30S ribosomal subunit. Forms a bridge to the 50S subunit in the 70S ribosome, contacting the 23S rRNA.

Functionally, one of the primary rRNA binding proteins, it binds directly to 16S rRNA where it helps nucleate assembly of the platform of the 30S subunit by binding and bridging several RNA helices of the 16S rRNA. Forms an intersubunit bridge (bridge B4) with the 23S rRNA of the 50S subunit in the ribosome. This is Small ribosomal subunit protein uS15 from Histophilus somni (strain 129Pt) (Haemophilus somnus).